The sequence spans 84 residues: Acyl carrier protein MbtL (84 aa).

One can recognise a Carrier domain in the interval 6-81; that stretch reads STVSTTLLSI…ELEAAIAAKY (76 aa). S41 bears the O-(pantetheine 4'-phosphoryl)serine mark.

In terms of processing, 4'-phosphopantetheine is transferred from CoA to a specific serine of apo-ACP, leading to the activated holo-ACP form.

Its subcellular location is the cytoplasm. Its pathway is siderophore biosynthesis; mycobactin biosynthesis. Its function is as follows. Acyl carrier protein involved in the formation of acyl-S-ACP intermediates within the mycobactin biosynthesis process. The aliphatic chains carried by ACP are subsequently transferred on to the mycobactin core by MbtK. The protein is Acyl carrier protein MbtL (mbtL) of Mycobacterium bovis (strain ATCC BAA-935 / AF2122/97).